The sequence spans 471 residues: Replication factor C large subunit (471 aa).

44–51 is a binding site for ATP; it reads GSPGIGKT. Over residues 422–431 the composition is skewed to basic and acidic residues; sequence RTDAAVDHSE. The tract at residues 422–471 is disordered; the sequence is RTDAAVDHSEGAFAGAVREDNTDEDSAADETTDGDEDTGADSQRGLDEFF. Residues 442 to 460 show a composition bias toward acidic residues; sequence NTDEDSAADETTDGDEDTG.

It belongs to the activator 1 small subunits family. RfcL subfamily. As to quaternary structure, heteromultimer composed of small subunits (RfcS) and large subunits (RfcL).

In terms of biological role, part of the RFC clamp loader complex which loads the PCNA sliding clamp onto DNA. In Halobacterium salinarum (strain ATCC 29341 / DSM 671 / R1), this protein is Replication factor C large subunit.